The following is a 213-amino-acid chain: MDSEKILNAVKEARTLAKPRNFTQSVDLIVNLKELDLSRPENRLKEQIVLPSGRGKDVAIAVIAKGDLAAQAEDMGLTVIRQEELEELGKNKKTAKKIANAHGFFIAQADMMPLVGKSLGPVLGPRGKMPQPVPANANLAPLVARFQKTVAINTRDKALFQVYIGTESMSDDELAANAEAILNVVSKKYEKGLYHVKNAFTKLTMGAAAPIEK.

This sequence belongs to the universal ribosomal protein uL1 family. Part of the 50S ribosomal subunit.

Binds directly to 23S rRNA. Probably involved in E site tRNA release. Its function is as follows. Protein L1 is also a translational repressor protein, it controls the translation of its operon by binding to its mRNA. This Methanococcus maripaludis (strain DSM 14266 / JCM 13030 / NBRC 101832 / S2 / LL) protein is Large ribosomal subunit protein uL1.